The chain runs to 128 residues: Regulator of ribonuclease activity B (128 aa).

It belongs to the RraB family. As to quaternary structure, interacts with the C-terminal region of Rne.

It is found in the cytoplasm. Globally modulates RNA abundance by binding to RNase E (Rne) and regulating its endonucleolytic activity. Can modulate Rne action in a substrate-dependent manner by altering the composition of the degradosome. The polypeptide is Regulator of ribonuclease activity B (Idiomarina loihiensis (strain ATCC BAA-735 / DSM 15497 / L2-TR)).